A 283-amino-acid polypeptide reads, in one-letter code: Putative replication protein XF_b0001 (283 aa).

This Xylella fastidiosa (strain 9a5c) protein is Putative replication protein XF_b0001.